Consider the following 466-residue polypeptide: MSREINVNQMIDDSKLTPFHWRVIILSTLIIIFDGYDLVIYGVALPLLMKEWAIDPVTAGFIGSIALFGMMFGALIFGTIADKLEHLGVSRKKVIAVCIILFSLCTVLCGFSETTTQFSIFRFLAGVGIGGVMPNVIALVSEYAPKKFKSFFVTLMFSGYAIGGMTAAFLGSILVPLYGWKIMFMIAGIPLVLLLPLMKVLPESIDYLVRKKKDETVRFIMTKMVPSYQYQPDHVFVLNSSNQNQAQAPVKMIFQEQRAFSTMMFWCSIFMTLIMVYALGNWLPKLMIEAGYNLSKSLIFLFSLNVGGMIGSILGGYLADRYNVKFVTMGLLLLGAISLSLLSFQFSSVILYILIACAGAASIGAQIMLLAYMAKFYAPNVRSTGIGWGLGMGRVGAILGPILTGWLLSLQLPHFYNFLALSIPAVLGIVTVFLINDRRMYQPEPISPIANQNDTTTVKVNEAVSH.

Residues 1–22 are Cytoplasmic-facing; that stretch reads MSREINVNQMIDDSKLTPFHWR. Residues 23–43 form a helical membrane-spanning segment; it reads VIILSTLIIIFDGYDLVIYGV. The Periplasmic segment spans residues 44–60; it reads ALPLLMKEWAIDPVTAG. Residues 61 to 81 traverse the membrane as a helical segment; the sequence is FIGSIALFGMMFGALIFGTIA. Topologically, residues 82 to 93 are cytoplasmic; it reads DKLEHLGVSRKK. The chain crosses the membrane as a helical span at residues 94–114; that stretch reads VIAVCIILFSLCTVLCGFSET. At 115-119 the chain is on the periplasmic side; it reads TTQFS. The helical transmembrane segment at 120–140 threads the bilayer; it reads IFRFLAGVGIGGVMPNVIALV. The Cytoplasmic segment spans residues 141-150; the sequence is SEYAPKKFKS. Residues 151–171 traverse the membrane as a helical segment; sequence FFVTLMFSGYAIGGMTAAFLG. At 172 to 181 the chain is on the periplasmic side; the sequence is SILVPLYGWK. The chain crosses the membrane as a helical span at residues 182–202; sequence IMFMIAGIPLVLLLPLMKVLP. Topologically, residues 203 to 258 are cytoplasmic; that stretch reads ESIDYLVRKKKDETVRFIMTKMVPSYQYQPDHVFVLNSSNQNQAQAPVKMIFQEQR. A helical transmembrane segment spans residues 259–279; the sequence is AFSTMMFWCSIFMTLIMVYAL. The Periplasmic segment spans residues 280 to 297; it reads GNWLPKLMIEAGYNLSKS. The chain crosses the membrane as a helical span at residues 298–318; the sequence is LIFLFSLNVGGMIGSILGGYL. At 319 to 325 the chain is on the cytoplasmic side; sequence ADRYNVK. The helical transmembrane segment at 326–346 threads the bilayer; the sequence is FVTMGLLLLGAISLSLLSFQF. The Periplasmic portion of the chain corresponds to 347–348; it reads SS. Residues 349–369 traverse the membrane as a helical segment; the sequence is VILYILIACAGAASIGAQIML. The Cytoplasmic segment spans residues 370–387; it reads LAYMAKFYAPNVRSTGIG. The chain crosses the membrane as a helical span at residues 388 to 408; sequence WGLGMGRVGAILGPILTGWLL. At 409–414 the chain is on the periplasmic side; that stretch reads SLQLPH. A helical membrane pass occupies residues 415–435; it reads FYNFLALSIPAVLGIVTVFLI. At 436-466 the chain is on the cytoplasmic side; the sequence is NDRRMYQPEPISPIANQNDTTTVKVNEAVSH.

This sequence belongs to the major facilitator superfamily. Aromatic acid:H(+) symporter (AAHS) (TC 2.A.1.15) family.

It is found in the cell inner membrane. Probable uptake of benzoate. This Acinetobacter baylyi (strain ATCC 33305 / BD413 / ADP1) protein is Benzoate transport protein (benK).